Reading from the N-terminus, the 143-residue chain is UPF0201 protein PAE1632 (143 aa).

It belongs to the UPF0201 family.

This chain is UPF0201 protein PAE1632, found in Pyrobaculum aerophilum (strain ATCC 51768 / DSM 7523 / JCM 9630 / CIP 104966 / NBRC 100827 / IM2).